Reading from the N-terminus, the 336-residue chain is Large ribosomal subunit protein uL1m (336 aa).

The N-terminal 50 residues, 1–50 (MAAAVRCLRRVLIHHQRHCLCKMASQASLYPCSVNSLLHNRHFAAAAAAA), are a transit peptide targeting the mitochondrion. At Ser-85 the chain carries Phosphoserine.

It belongs to the universal ribosomal protein uL1 family.

It localises to the mitochondrion. This chain is Large ribosomal subunit protein uL1m (Mrpl1), found in Mus musculus (Mouse).